We begin with the raw amino-acid sequence, 56 residues long: Large ribosomal subunit protein bL33 (56 aa).

Belongs to the bacterial ribosomal protein bL33 family.

The polypeptide is Large ribosomal subunit protein bL33 (Delftia acidovorans (strain DSM 14801 / SPH-1)).